We begin with the raw amino-acid sequence, 578 residues long: Matrix metalloproteinase-17 (578 aa).

Disordered regions lie at residues M1–G22 and P107–S133. A signal peptide spans M1 to A39. Positions P11 to G22 are enriched in pro residues. Residues A40–R124 constitute a propeptide that is removed on maturation. The Cysteine switch motif lies at P107–L114. Position 109 (C109) interacts with Zn(2+). The N-linked (GlcNAc...) asparagine glycan is linked to N136. H247 serves as a coordination point for Zn(2+). E248 is a catalytic residue. Residues H251 and H257 each contribute to the Zn(2+) site. The disordered stretch occupies residues P301–H334. N322 carries N-linked (GlcNAc...) asparagine glycosylation. 4 Hemopexin repeats span residues P333 to L382, L386 to P432, D436 to V479, and P480 to C527. C336 and C527 are disulfide-bonded. The GPI-anchor amidated serine moiety is linked to residue S558. Residues D559 to L578 constitute a propeptide, removed in mature form.

The protein belongs to the peptidase M10A family. Requires Zn(2+) as cofactor. The cofactor is Ca(2+). Post-translationally, the precursor is cleaved by a furin endopeptidase. In terms of tissue distribution, expressed by monocytes and macrophages.

The protein resides in the cell membrane. Its subcellular location is the secreted. It is found in the extracellular space. It localises to the extracellular matrix. In terms of biological role, endopeptidase that degrades various components of the extracellular matrix, such as fibrin. May be involved in the activation of membrane-bound precursors of growth factors or inflammatory mediators, such as tumor necrosis factor-alpha. May also be involved in tumoral process. Not obvious if able to proteolytically activate progelatinase A. Does not hydrolyze collagen types I, II, III, IV and V, gelatin, fibronectin, laminin, decorin nor alpha1-antitrypsin. The chain is Matrix metalloproteinase-17 (Mmp17) from Mus musculus (Mouse).